A 423-amino-acid chain; its full sequence is MTEFQTLRGMVDLLPMQTQRWQIVENLARHHFHRAGLKEIRTPLLEITELFARGIGEATDVVGKEMYTFLDRGDRSCTLRPEGTASVVRSVVQHGLLNQGPQRLWYGGPMFRYERPQAGRQRQFHQMGVEFFGLPSIHADAELISIAWDLLQDLGLKDLKLELNSLGTFEDRQNYHARLNEWLECNFKLLDKDSQDRIHKNPLRILDTKNQSTQELLKDAPLLTDYLSDLSKERFLCLQEALHKLKIPFDLNHNLVRGLDYYCHTAFEITSSQLGAQATVCGGGRYDRLVKQLGGPDTPSIGWAIGMERLIILLEDSIHKEQFVDVYFINRGELPAIEALSLTRKLRAFNIIVELDHSQANFSKQFKRANRSNAKWAIIMGEDEIAKGEIRLKRLTSSINGDGFDEICFRNSEFNELVHTLKN.

This sequence belongs to the class-II aminoacyl-tRNA synthetase family. As to quaternary structure, homodimer.

It localises to the cytoplasm. It catalyses the reaction tRNA(His) + L-histidine + ATP = L-histidyl-tRNA(His) + AMP + diphosphate + H(+). The sequence is that of Histidine--tRNA ligase from Prochlorococcus marinus (strain MIT 9211).